The following is a 745-amino-acid chain: Interleukin-17 receptor D (745 aa).

The signal sequence occupies residues 1–26; the sequence is MAGSRRLAHFFMASCLFLCYTASVNG. Over 27-298 the chain is Extracellular; sequence GKRGNSDKCS…VHSPWAGPIR (272 aa). N-linked (GlcNAc...) asparagine glycosylation is found at asparagine 61, asparagine 79, asparagine 136, asparagine 170, asparagine 205, and asparagine 276. The chain crosses the membrane as a helical span at residues 299–319; that stretch reads AMAITVPLVIMSAFATLFTVM. The Cytoplasmic portion of the chain corresponds to 320–745; sequence CRKKQQENIY…SEGLIAAAST (426 aa). The SEFIR domain maps to 354–518; that stretch reads RPKIFICYSS…LMDQLPQLFA (165 aa). 2 disordered regions span residues 432–454 and 631–713; these read RHRK…DSSS and REDL…PPAV. Over residues 439 to 448 the composition is skewed to basic and acidic residues; that stretch reads TSKEKNREPS. The segment covering 693–705 has biased composition (low complexity); sequence SSLADSVSSSSGL.

Interacts with fgfr1 and fgfr2.

The protein localises to the membrane. In terms of biological role, feedback inhibitor of fibroblast growth factor mediated Ras-MAPK signaling and ERK activation. May inhibit FGF-induced FGFR1 tyrosine phosphorylation. The protein is Interleukin-17 receptor D (il17rd) of Danio rerio (Zebrafish).